The primary structure comprises 177 residues: Phycoerythrin beta subunit (177 aa).

4 residues coordinate (2R,3E)-phycocyanobilin: Tyr-18, Lys-28, Asn-35, and Asp-39. 3 residues coordinate 15,16-dihydrobiliverdin: Cys-50, Asp-54, and Cys-61. Positions 77, 82, 84, and 85 each coordinate (2R,3E)-phycocyanobilin. 15,16-dihydrobiliverdin-binding residues include Arg-129, Gln-148, and Lys-149. (2R,3E)-phycocyanobilin is bound by residues Pro-154, Gly-156, and Cys-158.

The protein belongs to the phycobiliprotein family. As to quaternary structure, heterotetramer of 2 identical alpha chains and 2 identical beta chains which form 2 alpha-beta heterodimers within the heterotetramer. The two alpha-beta heterodimers are rotated to an open configuration in contrast to the closed configuration found in other cryptophyte species due to the insertion of a single amino acid, 'Asp-65', in a conserved region of the alpha chain. In the open form, the central chromophores are not in physical contact but are separated by a water-filled channel. Post-translationally, contains three phycocyanobilin chromophores and one 15,16-dihydrobiliverdin chromophore with binding of the phycocyanobilin chromophores mediated by both the alpha and beta subunits.

It is found in the plastid. It localises to the chloroplast thylakoid membrane. Functionally, light-harvesting photosynthetic bile pigment-protein from the phycobiliprotein complex. The chain is Phycoerythrin beta subunit from Hemiselmis virescens.